The sequence spans 282 residues: Protoheme IX farnesyltransferase (282 aa).

The next 9 helical transmembrane spans lie at Leu-9 to Ala-29, Leu-39 to Phe-59, Leu-79 to Leu-99, Leu-102 to Val-122, Val-139 to Ile-159, Leu-165 to Leu-185, Ile-210 to Ser-230, Ala-231 to Ile-251, and Val-261 to Met-281.

It belongs to the UbiA prenyltransferase family. Protoheme IX farnesyltransferase subfamily.

The protein localises to the cell inner membrane. The enzyme catalyses heme b + (2E,6E)-farnesyl diphosphate + H2O = Fe(II)-heme o + diphosphate. The protein operates within porphyrin-containing compound metabolism; heme O biosynthesis; heme O from protoheme: step 1/1. In terms of biological role, converts heme B (protoheme IX) to heme O by substitution of the vinyl group on carbon 2 of heme B porphyrin ring with a hydroxyethyl farnesyl side group. The chain is Protoheme IX farnesyltransferase from Francisella tularensis subsp. tularensis (strain FSC 198).